Reading from the N-terminus, the 184-residue chain is MESFSSKSLALQAEKKLLSKMVGRSAAHLFIDETSSEVLDELYRVSKEYTHSRPQAQRVIKDLIKVAVKVAVLHRSGCFGPSELALATRFRQKLRQGAMTALSFGEVDFTFEAAVLAGLLTECRDVLLELVENHLTPKSHGRIRHVFDHFSDPGLLTALYGPDFTQHLGKICDGLRKLLEEGKL.

A Phosphoserine modification is found at Ser-3.

Belongs to the TNFAIP8 family. TNFAIP8L2 subfamily. May interact with CASP8; however, such result is unclear since could not reproduce the interaction with CASP8. Interacts with RAC1. Phosphorylated by TAK1/MAP3K7; this phosphorylation triggers association with BTRC and subsequent ubiquitination and degradation. In terms of processing, ubiquitinated in a BTRC-depdent manner; leading to degradation mediated through the proteasome pathway.

Its subcellular location is the cytoplasm. The protein localises to the nucleus. It localises to the lysosome. Acts as a negative regulator of innate and adaptive immunity by maintaining immune homeostasis. Plays a regulatory role in the Toll-like signaling pathway by determining the strength of LPS-induced signaling and gene expression. Inhibits TCR-mediated T-cell activation and negatively regulate T-cell function to prevent hyperresponsiveness. Also inhibits autolysosome formation via negatively modulating MTOR activation by interacting with RAC1 and promoting the disassociation of the RAC1-MTOR complex. Plays an essential role in NK-cell biology by acting as a checkpoint and displaying an expression pattern correlating with NK-cell maturation process and by negatively regulating NK-cell maturation and antitumor immunity. Mechanistically, suppresses IL-15-triggered mTOR activity in NK-cells. The polypeptide is Tumor necrosis factor alpha-induced protein 8-like protein 2 (TNFAIP8L2) (Oryctolagus cuniculus (Rabbit)).